A 558-amino-acid polypeptide reads, in one-letter code: Membrane protein insertase YidC (558 aa).

Helical transmembrane passes span 6–26 (SFFIIVFLIVSFILWKIWDDE), 359–379 (FIHTYTIDNWGISIILITVII), 434–454 (LGGCLPLLIQMPIFLALYYML), 480–500 (ILPIIMGITMFFIQKLSPTTI), and 513–533 (LVIFTIFFLWFPSGLVLYYII).

This sequence belongs to the OXA1/ALB3/YidC family. Type 1 subfamily. In terms of assembly, interacts with the Sec translocase complex via SecD. Specifically interacts with transmembrane segments of nascent integral membrane proteins during membrane integration.

The protein localises to the cell inner membrane. In terms of biological role, required for the insertion and/or proper folding and/or complex formation of integral membrane proteins into the membrane. Involved in integration of membrane proteins that insert both dependently and independently of the Sec translocase complex, as well as at least some lipoproteins. Aids folding of multispanning membrane proteins. The polypeptide is Membrane protein insertase YidC (Blochmanniella floridana).